The chain runs to 418 residues: Gamma-glutamyl phosphate reductase (418 aa).

It belongs to the gamma-glutamyl phosphate reductase family.

It is found in the cytoplasm. The catalysed reaction is L-glutamate 5-semialdehyde + phosphate + NADP(+) = L-glutamyl 5-phosphate + NADPH + H(+). The protein operates within amino-acid biosynthesis; L-proline biosynthesis; L-glutamate 5-semialdehyde from L-glutamate: step 2/2. Catalyzes the NADPH-dependent reduction of L-glutamate 5-phosphate into L-glutamate 5-semialdehyde and phosphate. The product spontaneously undergoes cyclization to form 1-pyrroline-5-carboxylate. This Pelobacter propionicus (strain DSM 2379 / NBRC 103807 / OttBd1) protein is Gamma-glutamyl phosphate reductase.